Reading from the N-terminus, the 262-residue chain is MRSKIYFTSDAHLGSRHHADPMTVERRLAAWLERIRHEAKAIYFMGDMFDYWFEYRYVVPRGFTRFLGKVAELSDEGVEIHFFAGNHDVWLTDYLTKELGAHVHMHGITVELSGKLFRLAHGDEEYRSVKRSYDCMYRLFRNPLARLLYAAVHPRWTVGLAYGISLKSRRSGEKRKTLGNIPHAYSNDYFDIENEWLIRFAKEHSARHPEVDFYIFGHRHLLVDMALRDEKRVLILGDWIRYNSYAVWDGTTLVLESMEDME.

Mn(2+) is bound by residues Asp-10, His-12, Asp-47, Asn-86, His-121, His-218, and His-220.

The protein belongs to the LpxH family. Mn(2+) serves as cofactor.

It is found in the cell inner membrane. It localises to the cytoplasm. It catalyses the reaction UDP-2-N,3-O-bis[(3R)-3-hydroxytetradecanoyl]-alpha-D-glucosamine + H2O = 2-N,3-O-bis[(3R)-3-hydroxytetradecanoyl]-alpha-D-glucosaminyl 1-phosphate + UMP + 2 H(+). It functions in the pathway glycolipid biosynthesis; lipid IV(A) biosynthesis; lipid IV(A) from (3R)-3-hydroxytetradecanoyl-[acyl-carrier-protein] and UDP-N-acetyl-alpha-D-glucosamine: step 4/6. Functionally, hydrolyzes the pyrophosphate bond of UDP-2,3-diacylglucosamine to yield 2,3-diacylglucosamine 1-phosphate (lipid X) and UMP by catalyzing the attack of water at the alpha-P atom. Involved in the biosynthesis of lipid A, a phosphorylated glycolipid that anchors the lipopolysaccharide to the outer membrane of the cell. In Porphyromonas gingivalis (strain ATCC BAA-308 / W83), this protein is UDP-2,3-diacylglucosamine hydrolase.